Consider the following 347-residue polypeptide: Beta-hexosaminidase (347 aa).

Substrate contacts are provided by residues Asp62, Arg70, Arg134, and 164–165 (KH). The active-site Proton donor/acceptor is His177. Asp249 (nucleophile) is an active-site residue.

The protein belongs to the glycosyl hydrolase 3 family. NagZ subfamily.

It is found in the cytoplasm. It catalyses the reaction Hydrolysis of terminal non-reducing N-acetyl-D-hexosamine residues in N-acetyl-beta-D-hexosaminides.. It functions in the pathway cell wall biogenesis; peptidoglycan recycling. Its function is as follows. Plays a role in peptidoglycan recycling by cleaving the terminal beta-1,4-linked N-acetylglucosamine (GlcNAc) from peptide-linked peptidoglycan fragments, giving rise to free GlcNAc, anhydro-N-acetylmuramic acid and anhydro-N-acetylmuramic acid-linked peptides. The protein is Beta-hexosaminidase of Mannheimia succiniciproducens (strain KCTC 0769BP / MBEL55E).